The primary structure comprises 106 residues: PTS system N,N'-diacetylchitobiose-specific EIIB component (106 aa).

The region spanning 3-106 (KKHIYLFCSA…VAAIKKAAAN (104 aa)) is the PTS EIIB type-3 domain. The Phosphocysteine intermediate role is filled by Cys-10. A Phosphocysteine; by EIIA modification is found at Cys-10.

Forms a complex with ChbA (EIIA). ChbB is a monomer in both its unphosphorylated and phosphorylated forms.

It is found in the cytoplasm. The catalysed reaction is N,N'-diacetylchitobiose(out) + N(pros)-phospho-L-histidyl-[protein] = diacetylchitobiose-6'-phosphate(in) + L-histidyl-[protein]. Its function is as follows. The phosphoenolpyruvate-dependent sugar phosphotransferase system (sugar PTS), a major carbohydrate active transport system, catalyzes the phosphorylation of incoming sugar substrates concomitantly with their translocation across the cell membrane. The enzyme II ChbABC PTS system is involved in the transport of the chitin disaccharide N,N'-diacetylchitobiose (GlcNAc2). The polypeptide is PTS system N,N'-diacetylchitobiose-specific EIIB component (chbB) (Escherichia coli O157:H7).